A 514-amino-acid polypeptide reads, in one-letter code: 3-octaprenyl-4-hydroxybenzoate carboxy-lyase (514 aa).

Residue Asn-177 participates in Mn(2+) binding. Residues 180–182 (IYR), 194–196 (RWL), and 199–200 (RG) contribute to the prenylated FMN site. Glu-243 is a binding site for Mn(2+). Asp-314 (proton donor) is an active-site residue.

Belongs to the UbiD family. Homohexamer. It depends on prenylated FMN as a cofactor. Mn(2+) serves as cofactor.

It localises to the cell membrane. It catalyses the reaction a 4-hydroxy-3-(all-trans-polyprenyl)benzoate + H(+) = a 2-(all-trans-polyprenyl)phenol + CO2. Its pathway is cofactor biosynthesis; ubiquinone biosynthesis. Its function is as follows. Catalyzes the decarboxylation of 3-octaprenyl-4-hydroxy benzoate to 2-octaprenylphenol, an intermediate step in ubiquinone biosynthesis. The protein is 3-octaprenyl-4-hydroxybenzoate carboxy-lyase of Bordetella parapertussis (strain 12822 / ATCC BAA-587 / NCTC 13253).